The chain runs to 120 residues: NADH-ubiquinone oxidoreductase chain 3 (120 aa).

A run of 3 helical transmembrane segments spans residues Ile-10–Phe-30, Phe-62–Phe-82, and Met-89–Ile-109.

Belongs to the complex I subunit 3 family.

The protein localises to the mitochondrion membrane. The catalysed reaction is a ubiquinone + NADH + 5 H(+)(in) = a ubiquinol + NAD(+) + 4 H(+)(out). In terms of biological role, core subunit of the mitochondrial membrane respiratory chain NADH dehydrogenase (Complex I) that is believed to belong to the minimal assembly required for catalysis. Complex I functions in the transfer of electrons from NADH to the respiratory chain. The immediate electron acceptor for the enzyme is believed to be ubiquinone. The protein is NADH-ubiquinone oxidoreductase chain 3 (nad3) of Dictyostelium citrinum (Slime mold).